Reading from the N-terminus, the 198-residue chain is Nucleoid occlusion factor SlmA (198 aa).

An HTH tetR-type domain is found at 9-70; it reads RNRREEILQA…SLIEFIEDSL (62 aa). A DNA-binding region (H-T-H motif) is located at residues 33 to 52; the sequence is TTAKLAANVGVSEAALYRHF. Positions 113–144 form a coiled coil; that stretch reads ALMFEQDRLQDRINQLFERIESQLRQVLREHK.

It belongs to the nucleoid occlusion factor SlmA family. As to quaternary structure, homodimer. Interacts with FtsZ.

The protein resides in the cytoplasm. Its subcellular location is the nucleoid. In terms of biological role, required for nucleoid occlusion (NO) phenomenon, which prevents Z-ring formation and cell division over the nucleoid. Acts as a DNA-associated cell division inhibitor that binds simultaneously chromosomal DNA and FtsZ, and disrupts the assembly of FtsZ polymers. SlmA-DNA-binding sequences (SBS) are dispersed on non-Ter regions of the chromosome, preventing FtsZ polymerization at these regions. The polypeptide is Nucleoid occlusion factor SlmA (Pectobacterium carotovorum subsp. carotovorum (strain PC1)).